The sequence spans 63 residues: Large ribosomal subunit protein bL28 (63 aa).

This sequence belongs to the bacterial ribosomal protein bL28 family.

This is Large ribosomal subunit protein bL28 from Desulfatibacillum aliphaticivorans.